Consider the following 553-residue polypeptide: Dihydroxy-acid dehydratase (553 aa).

Aspartate 78 contributes to the Mg(2+) binding site. Cysteine 119 contacts [2Fe-2S] cluster. 2 residues coordinate Mg(2+): aspartate 120 and lysine 121. Lysine 121 is modified (N6-carboxylysine). A [2Fe-2S] cluster-binding site is contributed by cysteine 193. Glutamate 441 is a binding site for Mg(2+). Serine 467 functions as the Proton acceptor in the catalytic mechanism.

It belongs to the IlvD/Edd family. Homodimer. [2Fe-2S] cluster is required as a cofactor. Mg(2+) serves as cofactor.

It carries out the reaction (2R)-2,3-dihydroxy-3-methylbutanoate = 3-methyl-2-oxobutanoate + H2O. It catalyses the reaction (2R,3R)-2,3-dihydroxy-3-methylpentanoate = (S)-3-methyl-2-oxopentanoate + H2O. Its pathway is amino-acid biosynthesis; L-isoleucine biosynthesis; L-isoleucine from 2-oxobutanoate: step 3/4. The protein operates within amino-acid biosynthesis; L-valine biosynthesis; L-valine from pyruvate: step 3/4. In terms of biological role, functions in the biosynthesis of branched-chain amino acids. Catalyzes the dehydration of (2R,3R)-2,3-dihydroxy-3-methylpentanoate (2,3-dihydroxy-3-methylvalerate) into 2-oxo-3-methylpentanoate (2-oxo-3-methylvalerate) and of (2R)-2,3-dihydroxy-3-methylbutanoate (2,3-dihydroxyisovalerate) into 2-oxo-3-methylbutanoate (2-oxoisovalerate), the penultimate precursor to L-isoleucine and L-valine, respectively. The chain is Dihydroxy-acid dehydratase from Citrifermentans bemidjiense (strain ATCC BAA-1014 / DSM 16622 / JCM 12645 / Bem) (Geobacter bemidjiensis).